Consider the following 116-residue polypeptide: Large ribosomal subunit protein uL18 (116 aa).

Belongs to the universal ribosomal protein uL18 family. Part of the 50S ribosomal subunit; part of the 5S rRNA/L5/L18/L25 subcomplex. Contacts the 5S and 23S rRNAs.

Functionally, this is one of the proteins that bind and probably mediate the attachment of the 5S RNA into the large ribosomal subunit, where it forms part of the central protuberance. The sequence is that of Large ribosomal subunit protein uL18 from Shewanella oneidensis (strain ATCC 700550 / JCM 31522 / CIP 106686 / LMG 19005 / NCIMB 14063 / MR-1).